A 480-amino-acid polypeptide reads, in one-letter code: MTTDSSPAPVRELLSVAMVTLGCARNEVDSEELAGRLEADGFRLVQDPAEADTVVVNTCGFVEAAKKDSVDTLLQAADLKARSEQGQGRTRAVVAVGCLAERYGKDLAASLPEADAVFGFDDYPDIAARLRSIVAGEAHEAHTPHDRRTLLPITPVERVLSTTPVPGHASGPASVRRRLDDGPTAALKLASGCDRRCSFCAIPAFRGSFLSRRPSDVLQEARWLADHGARELFLVSENSTSYGKDLGDLRLLETLLPELAAVDGVERVRVSYLQPAETRAGLIEAIASTPGVAPYFDLSFQHASAPVLRRMRRFGDPESFLALLAQVRGHAPAAGVRSNVIVGFPGETEQDLETLCDFLVAARLDVTGVFGYSDEDGTEAATYDGKLDDDEIRARVEHVSDLVEELTSQRAAERLGEQVEVLVERVEDGPGGRTVEGRAAHQGPEVDGATYLLDSDARVGDLVRAVVVGSEGADLDARPL.

In terms of domain architecture, MTTase N-terminal spans 14-135; sequence LSVAMVTLGC…IAARLRSIVA (122 aa). Residues cysteine 23, cysteine 59, cysteine 98, cysteine 193, cysteine 197, and cysteine 200 each contribute to the [4Fe-4S] cluster site. Residues 179-410 enclose the Radical SAM core domain; the sequence is LDDGPTAALK…DLVEELTSQR (232 aa). A TRAM domain is found at 412–480; it reads AERLGEQVEV…EGADLDARPL (69 aa).

This sequence belongs to the methylthiotransferase family. RimO subfamily. Requires [4Fe-4S] cluster as cofactor.

It localises to the cytoplasm. It catalyses the reaction L-aspartate(89)-[ribosomal protein uS12]-hydrogen + (sulfur carrier)-SH + AH2 + 2 S-adenosyl-L-methionine = 3-methylsulfanyl-L-aspartate(89)-[ribosomal protein uS12]-hydrogen + (sulfur carrier)-H + 5'-deoxyadenosine + L-methionine + A + S-adenosyl-L-homocysteine + 2 H(+). Catalyzes the methylthiolation of an aspartic acid residue of ribosomal protein uS12. This Nocardioides sp. (strain ATCC BAA-499 / JS614) protein is Ribosomal protein uS12 methylthiotransferase RimO.